The primary structure comprises 149 residues: Large ribosomal subunit protein bL9 (149 aa).

The protein belongs to the bacterial ribosomal protein bL9 family.

In terms of biological role, binds to the 23S rRNA. This is Large ribosomal subunit protein bL9 from Helicobacter acinonychis (strain Sheeba).